The chain runs to 277 residues: Phosphatidylserine decarboxylase proenzyme (277 aa).

Active-site charge relay system; for autoendoproteolytic cleavage activity residues include aspartate 88, histidine 144, and serine 242. Serine 242 functions as the Schiff-base intermediate with substrate; via pyruvic acid; for decarboxylase activity in the catalytic mechanism. Serine 242 bears the Pyruvic acid (Ser); by autocatalysis mark.

It belongs to the phosphatidylserine decarboxylase family. PSD-B subfamily. Prokaryotic type I sub-subfamily. Heterodimer of a large membrane-associated beta subunit and a small pyruvoyl-containing alpha subunit. Requires pyruvate as cofactor. In terms of processing, is synthesized initially as an inactive proenzyme. Formation of the active enzyme involves a self-maturation process in which the active site pyruvoyl group is generated from an internal serine residue via an autocatalytic post-translational modification. Two non-identical subunits are generated from the proenzyme in this reaction, and the pyruvate is formed at the N-terminus of the alpha chain, which is derived from the carboxyl end of the proenzyme. The autoendoproteolytic cleavage occurs by a canonical serine protease mechanism, in which the side chain hydroxyl group of the serine supplies its oxygen atom to form the C-terminus of the beta chain, while the remainder of the serine residue undergoes an oxidative deamination to produce ammonia and the pyruvoyl prosthetic group on the alpha chain. During this reaction, the Ser that is part of the protease active site of the proenzyme becomes the pyruvoyl prosthetic group, which constitutes an essential element of the active site of the mature decarboxylase.

The protein localises to the cell membrane. The catalysed reaction is a 1,2-diacyl-sn-glycero-3-phospho-L-serine + H(+) = a 1,2-diacyl-sn-glycero-3-phosphoethanolamine + CO2. It functions in the pathway phospholipid metabolism; phosphatidylethanolamine biosynthesis; phosphatidylethanolamine from CDP-diacylglycerol: step 2/2. Its function is as follows. Catalyzes the formation of phosphatidylethanolamine (PtdEtn) from phosphatidylserine (PtdSer). The chain is Phosphatidylserine decarboxylase proenzyme from Psychrobacter cryohalolentis (strain ATCC BAA-1226 / DSM 17306 / VKM B-2378 / K5).